We begin with the raw amino-acid sequence, 61 residues long: Small ribosomal subunit protein uS14 (61 aa).

The Zn(2+) site is built by Cys-24, Cys-27, Cys-40, and Cys-43.

Belongs to the universal ribosomal protein uS14 family. Zinc-binding uS14 subfamily. Part of the 30S ribosomal subunit. Contacts proteins S3 and S10. Requires Zn(2+) as cofactor.

Binds 16S rRNA, required for the assembly of 30S particles and may also be responsible for determining the conformation of the 16S rRNA at the A site. The chain is Small ribosomal subunit protein uS14 from Chloroflexus aurantiacus (strain ATCC 29364 / DSM 637 / Y-400-fl).